The following is a 505-amino-acid chain: Serine/threonine protein kinase OSK1 (505 aa).

Residues 14–266 (YRIGKTLGIG…IREIREHQWF (253 aa)) form the Protein kinase domain. ATP is bound by residues 20–28 (LGIGSFGKV) and lysine 43. Aspartate 137 (proton acceptor) is an active-site residue. The UBA domain maps to 287–327 (KLDDETLNDVINMGFDKNQLIESLHKRLQNEATVAYYLLLD). Residues 347–361 (SSLAQVTPAETPNSA) are compositionally biased toward polar residues. Residues 347-372 (SSLAQVTPAETPNSATDHRQHGHMES) are disordered. The KA1 domain occupies 456–504 (SEKSTHTVKFEIQLYKTRDEKYLLDLQRVSGPQLLFLDLCSAFLTQLRV).

Belongs to the protein kinase superfamily. Ser/Thr protein kinase family. Expressed in young roots, young shoots, flowers, and immature seeds. Mostly expressed in leaf sheaths and roots, and to a lower extent, in germinating seeds, leaf blades and panicles.

It is found in the nucleus. The enzyme catalyses L-seryl-[protein] + ATP = O-phospho-L-seryl-[protein] + ADP + H(+). The catalysed reaction is L-threonyl-[protein] + ATP = O-phospho-L-threonyl-[protein] + ADP + H(+). Its function is as follows. Serine/threonine-protein kinase involved in sugar signaling during germination and seedling growth. Negative regulators of sugar response complex (SRC) in alpha-amylase gene promoters, thus relieving SRC sugar repression in a MYBS1-dependent manner. Required for MYBS1 and AAMY3 accumulation under glucose starvation. The protein is Serine/threonine protein kinase OSK1 of Oryza sativa subsp. japonica (Rice).